The following is a 1231-amino-acid chain: Cohesin subunit SA-2 (1231 aa).

M1 is subject to N-acetylmethionine. The interval 1–75 (MIAAPEIPTD…GSNRMNGHHQ (75 aa)) is disordered. Basic residues predominate over residues 36 to 48 (KQGKGKTCKKGKK). Residues 293–378 (FVHRYRDAIA…SRFKDRIVSM (86 aa)) form the SCD domain. K607 bears the N6-acetyllysine mark. S1058, S1061, S1064, and S1065 each carry phosphoserine. The segment at 1062–1087 (GMSSRGSTVRSKKSKPSTGKRKVVEG) is disordered. Positions 1071-1082 (RSKKSKPSTGKR) are enriched in basic residues. Phosphothreonine is present on T1112. Residues S1177 and S1178 each carry the phosphoserine modification.

Belongs to the SCC3 family. As to quaternary structure, interacts directly with RAD21 in cohesin complex. Cohesin complexes are composed of a heterodimer between a SMC1 protein (SMC1A or SMC1B) and SMC3, which are attached via their hinge domain, and RAD21 which link them at their heads, and one STAG protein (STAG1, STAG2 or STAG3). In cohesin complexes, STAG2 is mutually exclusive with STAG1 and STAG3. In terms of processing, phosphorylated by PLK1. The large dissociation of cohesin from chromosome arms during prophase is partly due to its phosphorylation.

The protein resides in the nucleus. It localises to the chromosome. The protein localises to the centromere. Component of cohesin complex, a complex required for the cohesion of sister chromatids after DNA replication. The cohesin complex apparently forms a large proteinaceous ring within which sister chromatids can be trapped. At anaphase, the complex is cleaved and dissociates from chromatin, allowing sister chromatids to segregate. The cohesin complex may also play a role in spindle pole assembly during mitosis. The polypeptide is Cohesin subunit SA-2 (Stag2) (Mus musculus (Mouse)).